The following is a 374-amino-acid chain: DNA replication and repair protein RecF (374 aa).

34–41 (GDNGAGKT) contacts ATP.

This sequence belongs to the RecF family.

It is found in the cytoplasm. Its function is as follows. The RecF protein is involved in DNA metabolism; it is required for DNA replication and normal SOS inducibility. RecF binds preferentially to single-stranded, linear DNA. It also seems to bind ATP. In Rhizobium johnstonii (strain DSM 114642 / LMG 32736 / 3841) (Rhizobium leguminosarum bv. viciae), this protein is DNA replication and repair protein RecF.